A 152-amino-acid chain; its full sequence is UPF0178 protein YaiI (152 aa).

Belongs to the UPF0178 family.

This chain is UPF0178 protein YaiI, found in Escherichia coli O17:K52:H18 (strain UMN026 / ExPEC).